A 183-amino-acid polypeptide reads, in one-letter code: MKNLIIAKRYSKALFNLAEEGRMIEQYGEELDNFVRLLGKLPELADALRNPLFPEATRKAIFAAVAEQLALTPIVRSFINLLIVKKRVEHLESIAQYYHRLIDEYSNVARAQVKAAIDLDEKVIQEIAKTLEKMTGKKIVVEFQKDPSLIGGVLAQIGDFVLDGSVKRQLLNFKETLKRGALG.

It belongs to the ATPase delta chain family. As to quaternary structure, F-type ATPases have 2 components, F(1) - the catalytic core - and F(0) - the membrane proton channel. F(1) has five subunits: alpha(3), beta(3), gamma(1), delta(1), epsilon(1). F(0) has three main subunits: a(1), b(2) and c(10-14). The alpha and beta chains form an alternating ring which encloses part of the gamma chain. F(1) is attached to F(0) by a central stalk formed by the gamma and epsilon chains, while a peripheral stalk is formed by the delta and b chains.

The protein resides in the cell inner membrane. Functionally, f(1)F(0) ATP synthase produces ATP from ADP in the presence of a proton or sodium gradient. F-type ATPases consist of two structural domains, F(1) containing the extramembraneous catalytic core and F(0) containing the membrane proton channel, linked together by a central stalk and a peripheral stalk. During catalysis, ATP synthesis in the catalytic domain of F(1) is coupled via a rotary mechanism of the central stalk subunits to proton translocation. In terms of biological role, this protein is part of the stalk that links CF(0) to CF(1). It either transmits conformational changes from CF(0) to CF(1) or is implicated in proton conduction. This is ATP synthase subunit delta from Syntrophobacter fumaroxidans (strain DSM 10017 / MPOB).